The sequence spans 436 residues: Protein disulfide-isomerase (436 aa).

Positions 216–365 constitute a Thioredoxin domain; the sequence is FLAGKIDPSI…VEDATESAKA (150 aa). Catalysis depends on nucleophile residues cysteine 266 and cysteine 269. The cysteines at positions 266 and 269 are disulfide-linked. Positions 328–436 are disordered; it reads TLVPHCRGSR…ASASSVKDEL (109 aa). Over residues 334–343 the composition is skewed to basic residues; sequence RGSRPVHRRE. Low complexity-rich tracts occupy residues 362-377 and 385-436; these read SAKA…AASA and VKSG…KDEL. A Prevents secretion from ER motif is present at residues 433–436; sequence KDEL.

This sequence belongs to the protein disulfide isomerase family.

It localises to the endoplasmic reticulum lumen. The enzyme catalyses Catalyzes the rearrangement of -S-S- bonds in proteins.. Participates in the folding of proteins containing disulfide bonds, may be involved in glycosylation, prolyl hydroxylation and triglyceride transfer. The polypeptide is Protein disulfide-isomerase (Alternaria alternata (Alternaria rot fungus)).